Consider the following 260-residue polypeptide: Methyl-coenzyme M reductase I subunit gamma (260 aa).

Residue R123 participates in coenzyme M binding.

Belongs to the methyl-coenzyme M reductase gamma subunit family. In terms of assembly, MCR is a hexamer of two alpha, two beta, and two gamma chains, forming a dimer of heterotrimers. The cofactor is coenzyme F430.

It is found in the cytoplasm. It carries out the reaction coenzyme B + methyl-coenzyme M = methane + coenzyme M-coenzyme B heterodisulfide. It functions in the pathway one-carbon metabolism; methyl-coenzyme M reduction; methane from methyl-coenzyme M: step 1/1. Functionally, component of the methyl-coenzyme M reductase (MCR) I that catalyzes the reductive cleavage of methyl-coenzyme M (CoM-S-CH3 or 2-(methylthio)ethanesulfonate) using coenzyme B (CoB or 7-mercaptoheptanoylthreonine phosphate) as reductant which results in the production of methane and the mixed heterodisulfide of CoB and CoM (CoM-S-S-CoB). This is the final step in methanogenesis. The sequence is that of Methyl-coenzyme M reductase I subunit gamma (mcrG) from Methanocaldococcus jannaschii (strain ATCC 43067 / DSM 2661 / JAL-1 / JCM 10045 / NBRC 100440) (Methanococcus jannaschii).